The chain runs to 71 residues: Large ribosomal subunit protein bL28 (71 aa).

The protein belongs to the bacterial ribosomal protein bL28 family.

The protein is Large ribosomal subunit protein bL28 of Finegoldia magna (strain ATCC 29328 / DSM 20472 / WAL 2508) (Peptostreptococcus magnus).